We begin with the raw amino-acid sequence, 556 residues long: MLTDIQIAQSCKMKPITQVAAELGIDEEELELYGKYKAKLSDKLWERVKDRPDGKLVLVTAINPTPAGEGKTTTTVGLGQAMARIGKKAVIALREPSLGPVMGIKGGAAGGGYSQVVPMEDINLHFTGDMHAITAANNLLSAAIDNHIQQGNELNIDVRQIIWKRAMDMNDRALRNIVVGLGGKANGVPREDGFQITVASEVMAVLCLSTGLMDLKERLGRILIGYTYDGKPVFAKDLKVNGAMALLLKDAIKPNLVQTLENTPAIVHGGPFANIAHGCNSIVATRLGLKLADYCITEAGFGADLGAEKFFNIKCRYAGLKPDLVVLVATIRALKYNGGVKKENLGIENLPALEKGFVNLEKHIENIRKFQVPLLVAINHFDTDSEAEIEYVKNRCKALNVEVAFSDVFSKGSEGGIELAEKVVKLTETQKSNFKPLYDVNLSIREKIEIIAREIYGADSVNILPAAERAIKKIEELKMDKLPICVAKTQYSLSDDPTLLGRPQGFVITVREIKLSSGAGFIVAITGDIMTMPGLPKVPAAEKIDIDENGVITGLF.

Residue 65–72 participates in ATP binding; it reads TPAGEGKT.

Belongs to the formate--tetrahydrofolate ligase family.

The enzyme catalyses (6S)-5,6,7,8-tetrahydrofolate + formate + ATP = (6R)-10-formyltetrahydrofolate + ADP + phosphate. Its pathway is one-carbon metabolism; tetrahydrofolate interconversion. The sequence is that of Formate--tetrahydrofolate ligase from Acetivibrio thermocellus (strain ATCC 27405 / DSM 1237 / JCM 9322 / NBRC 103400 / NCIMB 10682 / NRRL B-4536 / VPI 7372) (Clostridium thermocellum).